Here is a 379-residue protein sequence, read N- to C-terminus: Chaperone protein DnaJ (379 aa).

The J domain maps to 5-70 (DYYEVLGVGK…EKKAAYDQYG (66 aa)). The CR-type zinc-finger motif lies at 139–217 (GHEAQIRVPH…CHGQGKLKSQ (79 aa)). Residues Cys152, Cys155, Cys169, Cys172, Cys191, Cys194, Cys205, and Cys208 each coordinate Zn(2+). CXXCXGXG motif repeat units lie at residues 152 to 159 (CDHCHGNG), 169 to 176 (CPTCHGAG), 191 to 198 (CPKCHGSG), and 205 to 212 (CTKCHGQG). Residues 356–379 (VHEGGSRHSPQEQSWLDKVKSFFS) form a disordered region.

Belongs to the DnaJ family. Homodimer. Requires Zn(2+) as cofactor.

It is found in the cytoplasm. Functionally, participates actively in the response to hyperosmotic and heat shock by preventing the aggregation of stress-denatured proteins and by disaggregating proteins, also in an autonomous, DnaK-independent fashion. Unfolded proteins bind initially to DnaJ; upon interaction with the DnaJ-bound protein, DnaK hydrolyzes its bound ATP, resulting in the formation of a stable complex. GrpE releases ADP from DnaK; ATP binding to DnaK triggers the release of the substrate protein, thus completing the reaction cycle. Several rounds of ATP-dependent interactions between DnaJ, DnaK and GrpE are required for fully efficient folding. Also involved, together with DnaK and GrpE, in the DNA replication of plasmids through activation of initiation proteins. This Cupriavidus pinatubonensis (strain JMP 134 / LMG 1197) (Cupriavidus necator (strain JMP 134)) protein is Chaperone protein DnaJ.